A 98-amino-acid chain; its full sequence is NADH-ubiquinone oxidoreductase chain 4L (98 aa).

The next 3 helical transmembrane spans lie at 1-21 (MSLTYMNMFLAFTISLVGLLM), 29-49 (ALLCLEGMMLSLFVMMTITIL), and 61-81 (IILLVFAACEAALGLSLLVMV).

Belongs to the complex I subunit 4L family. Core subunit of respiratory chain NADH dehydrogenase (Complex I) which is composed of 45 different subunits.

The protein resides in the mitochondrion inner membrane. The catalysed reaction is a ubiquinone + NADH + 5 H(+)(in) = a ubiquinol + NAD(+) + 4 H(+)(out). In terms of biological role, core subunit of the mitochondrial membrane respiratory chain NADH dehydrogenase (Complex I) which catalyzes electron transfer from NADH through the respiratory chain, using ubiquinone as an electron acceptor. Part of the enzyme membrane arm which is embedded in the lipid bilayer and involved in proton translocation. The protein is NADH-ubiquinone oxidoreductase chain 4L (MT-ND4L) of Rhinophylla pumilio (Dwarf little fruit bat).